Here is a 160-residue protein sequence, read N- to C-terminus: Large ribosomal subunit protein eL21 (160 aa).

Basic and acidic residues-rich tracts occupy residues 112–123 and 136–145; these read NDQKKKEAKEKG and REAHFVRTNG. The tract at residues 112-145 is disordered; that stretch reads NDQKKKEAKEKGTWVQLKRQPAPPREAHFVRTNG.

The protein belongs to the eukaryotic ribosomal protein eL21 family. In terms of assembly, component of the large ribosomal subunit.

The protein localises to the cytoplasm. Its subcellular location is the cytosol. It localises to the endoplasmic reticulum. Component of the large ribosomal subunit. The ribosome is a large ribonucleoprotein complex responsible for the synthesis of proteins in the cell. This is Large ribosomal subunit protein eL21 (RPL21) from Oryctolagus cuniculus (Rabbit).